The sequence spans 266 residues: Luciferase (266 aa).

A helical transmembrane segment spans residues Gly-22 to Ile-41.

Belongs to the fungal luciferase family.

It localises to the membrane. It carries out the reaction 3-hydroxyhispidin + O2 = (E)-caffeoylpyruvate + hnu + CO2. The enzyme catalyses 3-hydroxyhispidin + O2 = 4-[(E)-2-(3,4-dihydroxyphenyl)ethenyl]-1,7-dihydroxy-2,3,5-trioxabicyclo[2.2.2]oct-7-en-6-one. In terms of biological role, luciferase; part of the gene cluster that mediates the fungal bioluminescence cycle. Uses the fungal luciferin 3-hydroxyhispidin as a substrate to produce an endoperoxide as a high-energy intermediate with decomposition that yields oxyluciferin (also known as caffeoylpyruvate) and light emission. The fungal bioluminescence cycle begins with the hispidin synthetase that catalyzes the formation of hispidin which is further hydroxylated by the hispidin-3-hydroxylase, yielding the fungal luciferin 3-hydroxyhispidin. The luciferase then produces an endoperoxide as a high-energy intermediate with decomposition that yields oxyluciferin and light emission. Oxyluciferin can be recycled to caffeic acid by caffeoylpyruvate hydrolase. The chain is Luciferase from Armillaria ostoyae (Armillaria root rot fungus).